Consider the following 177-residue polypeptide: Nucleoside triphosphate/diphosphate phosphatase (177 aa).

The Proton donor role is filled by Arg23. Mg(2+)-binding residues include Asn87, Asp103, Asp105, Asp107, Asp120, and Glu123.

It belongs to the Ntdp family. Mg(2+) is required as a cofactor.

The catalysed reaction is a ribonucleoside 5'-triphosphate + H2O = a ribonucleoside 5'-diphosphate + phosphate + H(+). It carries out the reaction a ribonucleoside 5'-diphosphate + H2O = a ribonucleoside 5'-phosphate + phosphate + H(+). Functionally, has nucleoside phosphatase activity towards nucleoside triphosphates and nucleoside diphosphates. This is Nucleoside triphosphate/diphosphate phosphatase from Streptococcus agalactiae serotype Ia (strain ATCC 27591 / A909 / CDC SS700).